The sequence spans 222 residues: V-type ATP synthase subunit D (222 aa).

The protein belongs to the V-ATPase D subunit family.

Functionally, produces ATP from ADP in the presence of a proton gradient across the membrane. The chain is V-type ATP synthase subunit D from Deinococcus geothermalis (strain DSM 11300 / CIP 105573 / AG-3a).